We begin with the raw amino-acid sequence, 1178 residues long: MVVNAKDSTVPTMEDFKELHNLVTHHIESFDYMTLKGLDVMFNRIKPVSVYDPNTENELSIWLENPLVFAPQKESFKSTSRKEPLLPFECRQAKISYTGTFMADVCFKYNDGVVVRDKFDFGQFPIMLMSKLCSLKGADCRKLLKCKESTSEMGGYFILNGIERVFRCVIAPKRNHPTSMIRNSFRDRKEGYSSKAVVTRCVRDDQSSVTVKLYYLRNGSARVGFWIVGREYLLPVGLVLKALTNSCDEEIYESLNCCYSEHYGRGDGAIGTQLVRERAKIILDEVRDLGLFTREQCRKHLGQHFQPVLDGVKKESLSIVAEAVLRDYLFVHLDNDHDKFNLLIFIIQKLYSLVDQTSLPDNPDSLQNQEILVPGHVITIYLKEKLEEWLRKCKSLLKDELDNTNSKFSFESLADVKKLINKNPPRSIGTSIETLLKTGALKTQSGLDLQQRAGYTVQAERLNFLRFLSFFRAVHRGASFAGLRTTTVRKLLPESWGFLCPVHTPDGTPCGLLNHMTRTSRITSQFDSKGNIRDFLKIRKSVVDVLTGAGMVPSLPKLVRAGPPKVIHVLLDGQVVGTLSSNLVTKVVSYIRRLKVEAPSVIPEDLEVGYVPTSMGGSYPGLYLASCPARFIRPVKNISIPSDNIELIGPFEQVFMEISCPDGGNGGRNNSSLATHEEIHPTGMISVVANLTPWSDHNQSPRNMYQCQMAKQTMAYSTQALQFRADQKIYHLQTPQSPVVRTKTYTTYSIDENPTGTNAIVAVLAHTGFDMEDAMILNKSSVERGMCHGQIYQTENIDLSDQNSRFDSGSKSFRRSTNKAEHFRIDADGLPSVGQKLYPDEPYCSIYDEVTNKTRHMKRKGTDPVIVDFVSVDMKSKKHPQRANIRFRHARNPIIGDKFSSRHGQKGVCSQLWPDIDMPFNGVTGMRPDLIINPHAFPSRMTIAMLLESIAAKGGSLHGKFVDATPFRDAVKKTNGEEESKSSLLVDDLGSMLKEKGFNHYGTETLYSGYLGVELKCEIFMGPVYYQRLRHMVSDKFQVRSTGQVDQLTHQPIKGRKRGGGIRFGEMERDSLLAHGASYLLHDRLHTSSDHHIADVCSLCGSLLTSSVVNVQQKKLIQEIGKLPPGRTPKKVTCYSCKTSKGMETVAMPYVFRYLAAELASMNIKMTLQLSDREGVTD.

The C4-type zinc finger occupies 1097 to 1137 (CSLCGSLLTSSVVNVQQKKLIQEIGKLPPGRTPKKVTCYSC).

This sequence belongs to the RNA polymerase beta chain family. As to quaternary structure, component of the RNA polymerase I (Pol I) complex consisting of at least 13 subunits.

Its subcellular location is the nucleus. It catalyses the reaction RNA(n) + a ribonucleoside 5'-triphosphate = RNA(n+1) + diphosphate. Functionally, DNA-dependent RNA polymerase catalyzes the transcription of DNA into RNA using the four ribonucleoside triphosphates as substrates. Second largest core component of RNA polymerase I which synthesizes ribosomal RNA precursors. Proposed to contribute to the polymerase catalytic activity and forms the polymerase active center together with the largest subunit. Pol I is composed of mobile elements and NRPA2 is part of the core element with the central large cleft and probably a clamp element that moves to open and close the cleft. In terms of biological role, essential for the completion of the three rounds of mitosis in female megaspores required for the development of mature gametophytes. The sequence is that of DNA-directed RNA polymerase I subunit 2 from Arabidopsis thaliana (Mouse-ear cress).